The primary structure comprises 426 residues: Casein kinase I (426 aa).

The Protein kinase domain occupies 9–278 (YRISRKIGGG…LRKLLREMFV (270 aa)). ATP is bound by residues 15–23 (IGGGSFGEI) and Lys38. Catalysis depends on Asp128, which acts as the Proton acceptor. 2 disordered regions span residues 340-360 (TTTT…TVSN) and 377-426 (PSYN…PPAK). Over residues 345-360 (SSSQPSNVKNISTVSN) the composition is skewed to polar residues. Residues 386–404 (QSPQQTTTTTSSSNPNQTT) are compositionally biased toward low complexity. Residues 414 to 426 (PQSSSTTTKPPAK) show a composition bias toward polar residues.

Belongs to the protein kinase superfamily. CK1 Ser/Thr protein kinase family. Casein kinase I subfamily. In terms of assembly, monomer. In terms of processing, autophosphorylated.

The protein resides in the cytoplasm. The protein localises to the nucleus. It carries out the reaction L-seryl-[protein] + ATP = O-phospho-L-seryl-[protein] + ADP + H(+). It catalyses the reaction L-threonyl-[protein] + ATP = O-phospho-L-threonyl-[protein] + ADP + H(+). Functionally, casein kinases are operationally defined by their preferential utilization of acidic proteins such as caseins as substrates. Can phosphorylate a large number of proteins. May have a role in DNA repair mechanism and support vegetative growth of the cells. This Dictyostelium discoideum (Social amoeba) protein is Casein kinase I (cak1-1).